The primary structure comprises 368 residues: MQTPSSHIIVRTPVIDSVGELYATRGLGKKTVLLFDENTRRLFGDAIIESMQRQGFRTIELVVPARETSKSVSTAWKLYGQMIEADVDRSWNLLCAGGGVVGDLGGYIAASYYRGIPVVQLPTTLLAMTDSSIGGKVAINHPLGKNLIGFFHMPELVLIDPAYLRTLPSREIYGGMSEVVKYGFIADREFFDLLTKHWDEVVRLEEPWLSKAVSRSAFIKANVVEKDFRETSGLRATLNFGHTFAHGLEKMAGYRNLRHGEAVTIGMVCALFLSHRPGFLAEADLREGLALLARFRFPRGLVNKRFLSLDRDELVESMLSDKKKIDKQLRFVLLDRIGHAFLHDKDITKTDVLQAIDDAMGWFSSAGF.

NAD(+) is bound by residues G99–D103, T123–T124, K136, and K145. The Zn(2+) site is built by E178, H242, and H259.

It belongs to the sugar phosphate cyclases superfamily. Dehydroquinate synthase family. Requires NAD(+) as cofactor. The cofactor is Co(2+). It depends on Zn(2+) as a cofactor.

The protein localises to the cytoplasm. It catalyses the reaction 7-phospho-2-dehydro-3-deoxy-D-arabino-heptonate = 3-dehydroquinate + phosphate. It participates in metabolic intermediate biosynthesis; chorismate biosynthesis; chorismate from D-erythrose 4-phosphate and phosphoenolpyruvate: step 2/7. Functionally, catalyzes the conversion of 3-deoxy-D-arabino-heptulosonate 7-phosphate (DAHP) to dehydroquinate (DHQ). The polypeptide is 3-dehydroquinate synthase (Chlorobaculum tepidum (strain ATCC 49652 / DSM 12025 / NBRC 103806 / TLS) (Chlorobium tepidum)).